A 91-amino-acid chain; its full sequence is DNA-directed RNA polymerase subunit omega (91 aa).

It belongs to the RNA polymerase subunit omega family. The RNAP catalytic core consists of 2 alpha, 1 beta, 1 beta' and 1 omega subunit. When a sigma factor is associated with the core the holoenzyme is formed, which can initiate transcription.

It carries out the reaction RNA(n) + a ribonucleoside 5'-triphosphate = RNA(n+1) + diphosphate. In terms of biological role, promotes RNA polymerase assembly. Latches the N- and C-terminal regions of the beta' subunit thereby facilitating its interaction with the beta and alpha subunits. The protein is DNA-directed RNA polymerase subunit omega of Aeromonas hydrophila subsp. hydrophila (strain ATCC 7966 / DSM 30187 / BCRC 13018 / CCUG 14551 / JCM 1027 / KCTC 2358 / NCIMB 9240 / NCTC 8049).